The chain runs to 745 residues: 5-methyltetrahydropteroyltriglutamate--homocysteine methyltransferase (745 aa).

Residues 19–22 (RELK) and lysine 119 each bind 5-methyltetrahydropteroyltri-L-glutamate. L-homocysteine is bound by residues 418-420 (IGS) and glutamate 471. L-methionine contacts are provided by residues 418 to 420 (IGS) and glutamate 471. Residues 502-503 (RC) and tryptophan 548 each bind 5-methyltetrahydropteroyltri-L-glutamate. Aspartate 586 serves as a coordination point for L-homocysteine. Residue aspartate 586 participates in L-methionine binding. 5-methyltetrahydropteroyltri-L-glutamate is bound at residue glutamate 592. The Zn(2+) site is built by histidine 628, cysteine 630, and glutamate 652. Residue histidine 681 is the Proton donor of the active site. Cysteine 713 lines the Zn(2+) pocket.

The protein belongs to the vitamin-B12 independent methionine synthase family. Requires Zn(2+) as cofactor.

The enzyme catalyses 5-methyltetrahydropteroyltri-L-glutamate + L-homocysteine = tetrahydropteroyltri-L-glutamate + L-methionine. It participates in amino-acid biosynthesis; L-methionine biosynthesis via de novo pathway; L-methionine from L-homocysteine (MetE route): step 1/1. Its function is as follows. Catalyzes the transfer of a methyl group from 5-methyltetrahydrofolate to homocysteine resulting in methionine formation. This Corynebacterium glutamicum (strain R) protein is 5-methyltetrahydropteroyltriglutamate--homocysteine methyltransferase.